Reading from the N-terminus, the 250-residue chain is Small ribosomal subunit protein uS3 (250 aa).

The 70-residue stretch at 16-85 (IDEYLEKELE…NPQIEVKEVS (70 aa)) folds into the KH type-2 domain.

The protein belongs to the universal ribosomal protein uS3 family. Part of the 30S ribosomal subunit.

Functionally, binds the lower part of the 30S subunit head. The sequence is that of Small ribosomal subunit protein uS3 from Methanobrevibacter smithii (strain ATCC 35061 / DSM 861 / OCM 144 / PS).